Reading from the N-terminus, the 503-residue chain is Pentatricopeptide repeat-containing protein At2g30100, chloroplastic (503 aa).

The N-terminal 50 residues, 1 to 50 (MAYAHVFASLTISTISLRRFLPRLHRNHSVKPNSRIICNLKLNYSAGKFR), are a transit peptide targeting the chloroplast. PPR repeat units lie at residues 341 to 375 (IGVV…GREP), 376 to 410 (EADL…GSQR), and 411 to 445 (KKKT…GLHP).

This sequence belongs to the PPR family. P subfamily.

The protein localises to the plastid. The protein resides in the chloroplast. This is Pentatricopeptide repeat-containing protein At2g30100, chloroplastic from Arabidopsis thaliana (Mouse-ear cress).